The sequence spans 237 residues: 5'-methylthioadenosine/S-adenosylhomocysteine nucleosidase (237 aa).

E12 acts as the Proton acceptor in catalysis. Substrate contacts are provided by residues A78, I152, and 173 to 174; that span reads ME. Residue D197 is the Proton donor of the active site.

The protein belongs to the PNP/UDP phosphorylase family. MtnN subfamily. Homodimer.

It carries out the reaction S-adenosyl-L-homocysteine + H2O = S-(5-deoxy-D-ribos-5-yl)-L-homocysteine + adenine. The enzyme catalyses S-methyl-5'-thioadenosine + H2O = 5-(methylsulfanyl)-D-ribose + adenine. It catalyses the reaction 5'-deoxyadenosine + H2O = 5-deoxy-D-ribose + adenine. It functions in the pathway amino-acid biosynthesis; L-methionine biosynthesis via salvage pathway; S-methyl-5-thio-alpha-D-ribose 1-phosphate from S-methyl-5'-thioadenosine (hydrolase route): step 1/2. In terms of biological role, catalyzes the irreversible cleavage of the glycosidic bond in both 5'-methylthioadenosine (MTA) and S-adenosylhomocysteine (SAH/AdoHcy) to adenine and the corresponding thioribose, 5'-methylthioribose and S-ribosylhomocysteine, respectively. Also cleaves 5'-deoxyadenosine, a toxic by-product of radical S-adenosylmethionine (SAM) enzymes, into 5-deoxyribose and adenine. Thus, is required for in vivo function of the radical SAM enzymes biotin synthase and lipoic acid synthase, that are inhibited by 5'-deoxyadenosine accumulation. This chain is 5'-methylthioadenosine/S-adenosylhomocysteine nucleosidase, found in Hamiltonella defensa subsp. Acyrthosiphon pisum (strain 5AT).